Reading from the N-terminus, the 545-residue chain is POTE ankyrin domain family member H (545 aa).

ANK repeat units lie at residues 180-208 (LHRAAWWGKVPRKDLIVMLKDTDMNKKDK), 209-238 (QKRTALHLASANGNSEVVKLLLDRRCQLNI), 242-271 (KKRTALTKAVQCQEDECALMLLEHGTDPNI), 275-304 (YGNTALHYAIYNEDKLMAKALLLYGADIES), 308-337 (HGLTPLLLGVHEQKQQVVKFLIKKKANLNA), 341-370 (YGRTALILAVCCGSASIVSLLLEQNIDVSS), and 374-404 (SGQTAREYAVSSRHNVICQLLSDYKEKQILK). The tract at residues 406 to 524 (SSENSNPEQD…KQLSEEQNTG (119 aa)) is disordered. Composition is skewed to basic and acidic residues over residues 414–429 (QDLKLTSEEESQRLKG) and 443–458 (EINKGGDRKVEEEMKK). Over residues 513–524 (TQKQLSEEQNTG) the composition is skewed to polar residues.

The protein belongs to the POTE family.

This chain is POTE ankyrin domain family member H (POTEH), found in Homo sapiens (Human).